A 493-amino-acid chain; its full sequence is Stage V sporulation protein AF (493 aa).

The next 5 helical transmembrane spans lie at 296-316 (FFGI…VLQP), 334-354 (IPII…RMAA), 363-383 (TAMG…VGLF), 387-407 (VILY…YELS), and 418-438 (MILV…VLII).

Belongs to the GerABKA family.

It is found in the cell membrane. The protein is Stage V sporulation protein AF (spoVAF) of Bacillus subtilis (strain 168).